A 386-amino-acid polypeptide reads, in one-letter code: Sphingosine 1-phosphate receptor 4 (386 aa).

Topologically, residues 1–56 (MNISTWSTLVTPESCHRLAASGHSLLIVLHYNHSGRLASRGGSEDGGGLGMLRGPS) are extracellular. Asn2 and Asn32 each carry an N-linked (GlcNAc...) asparagine glycan. A helical transmembrane segment spans residues 57–77 (VAAGCLVVLENAMVLAAIAIY). Over 78–87 (MRSRRWVYYC) the chain is Cytoplasmic. A helical membrane pass occupies residues 88-108 (LLNITLSDLLTGLAYVVNVLL). Topologically, residues 109-120 (SGTRTFQLSPVH) are extracellular. The chain crosses the membrane as a helical span at residues 121-141 (WFLREGLLFMALAASTFSLLF). Over 142–163 (TAGERFATMVRVAESGATKTSR) the chain is Cytoplasmic. Residues 164 to 184 (VYGCIGLCWLLAAILGLLPLL) traverse the membrane as a helical segment. At 185–208 (GWNCVCAFPRCSSLLPLYSKGYVL) the chain is on the extracellular side. The chain crosses the membrane as a helical span at residues 209 to 229 (FCVVVFALILVAILSLYGAIF). The Cytoplasmic portion of the chain corresponds to 230–254 (RVVRANGQKSPRPPARRKSRRLLNT). A helical transmembrane segment spans residues 255–275 (VLMILVAFVVCWGPLFGLLLA). Residues 276 to 290 (DIFGSNVWAQEYLRG) lie on the Extracellular side of the membrane. A helical membrane pass occupies residues 291–311 (MDWILALAVFNSAINPLIYSF). The Cytoplasmic segment spans residues 312–386 (RSREVQRAVL…LSSISSVRST (75 aa)). A lipid anchor (S-palmitoyl cysteine) is attached at Cys325.

This sequence belongs to the G-protein coupled receptor 1 family. As to expression, specifically expressed in fetal and adult lymphoid and hematopoietic tissue. Expressed in lung, spleen, thymus and lymph node but absent in other non-lymphatic tissue. Coexpressed with GNA15 at the same relative levels in all tissues examined, with the highest levels in adult spleen and lung.

It localises to the cell membrane. Its function is as follows. Receptor for the lysosphingolipid sphingosine 1-phosphate (S1P). S1P is a bioactive lysophospholipid that elicits diverse physiological effect on most types of cells and tissues. May be involved in cell migration processes that are specific for lymphocytes. This Mus musculus (Mouse) protein is Sphingosine 1-phosphate receptor 4 (S1pr4).